The following is a 319-amino-acid chain: Protein SODIUM POTASSIUM ROOT DEFECTIVE 1 (319 aa).

Residues 1–13 (MLCASQASTTTLC) are compositionally biased toward polar residues. 2 disordered regions span residues 1 to 113 (MLCA…TPQG) and 191 to 248 (SPDN…NSSS). Over residues 14–27 (STMDQTSQPSSSSS) the composition is skewed to low complexity. The segment covering 36 to 49 (AIDRHNPIIRDGRR) has biased composition (basic and acidic residues). Residues 58–67 (LNPSSSSSST) are compositionally biased toward low complexity. 2 stretches are compositionally biased toward polar residues: residues 104 to 113 (SCFSSDTPQG) and 200 to 210 (TKASPTASLSS). Over residues 224 to 242 (SPPPPPPPSPPQSSPPSPP) the composition is skewed to pro residues. Residues 249-315 (DQVVVLRVSL…KVKNAQFWPE (67 aa)) enclose the HMA domain. Residues Cys-260 and Cys-263 each coordinate Zn(2+).

In terms of assembly, interacts with FT, but not with TSF (TWIN SISTER OF FT). In terms of tissue distribution, expressed in vascular tissues of cotyledons, rosette leaves and roots in developing seedlings before and during the floral transition. Expressed specifically in the phloem companion cells. Not detected in embryos or seeds. Not detected in the vegetative shoot apex.

The protein localises to the cytoplasm. The protein resides in the nucleus. It localises to the endoplasmic reticulum. Its function is as follows. Required for root meristem maintenance after germination. Involved in phloem translocation, starch accumulation and flowering. Promotes flowering in the photoperiod pathway. Regulates long-distance movement of FT from leaves to the shoot apex through the phloem stream. The polypeptide is Protein SODIUM POTASSIUM ROOT DEFECTIVE 1 (Arabidopsis thaliana (Mouse-ear cress)).